Consider the following 176-residue polypeptide: Cytochrome b (176 aa).

3 helical membrane passes run 33–53 (FGSLLGICLALQILTGIFLAM), 77–98 (WVLRYLHANGASMFFICLYLHV), and 113–133 (WNMGVILLFAVMATAFMGYVL). Heme b contacts are provided by H83 and H97.

Belongs to the cytochrome b family. In terms of assembly, the cytochrome bc1 complex contains 11 subunits: 3 respiratory subunits (MT-CYB, CYC1 and UQCRFS1), 2 core proteins (UQCRC1 and UQCRC2) and 6 low-molecular weight proteins (UQCRH/QCR6, UQCRB/QCR7, UQCRQ/QCR8, UQCR10/QCR9, UQCR11/QCR10 and a cleavage product of UQCRFS1). This cytochrome bc1 complex then forms a dimer. Heme b is required as a cofactor.

The protein localises to the mitochondrion inner membrane. Functionally, component of the ubiquinol-cytochrome c reductase complex (complex III or cytochrome b-c1 complex) that is part of the mitochondrial respiratory chain. The b-c1 complex mediates electron transfer from ubiquinol to cytochrome c. Contributes to the generation of a proton gradient across the mitochondrial membrane that is then used for ATP synthesis. This is Cytochrome b (MT-CYB) from Lasionycteris noctivagans (Silver-haired bat).